Here is a 177-residue protein sequence, read N- to C-terminus: Large ribosomal subunit protein uL6 (177 aa).

The protein belongs to the universal ribosomal protein uL6 family. In terms of assembly, part of the 50S ribosomal subunit.

In terms of biological role, this protein binds to the 23S rRNA, and is important in its secondary structure. It is located near the subunit interface in the base of the L7/L12 stalk, and near the tRNA binding site of the peptidyltransferase center. The protein is Large ribosomal subunit protein uL6 of Aromatoleum aromaticum (strain DSM 19018 / LMG 30748 / EbN1) (Azoarcus sp. (strain EbN1)).